Here is a 296-residue protein sequence, read N- to C-terminus: N-acetylmuramic acid 6-phosphate etherase 2 (296 aa).

The region spanning 55 to 218 (IVANFKAGGR…STASMVGIGK (164 aa)) is the SIS domain. Glu83 functions as the Proton donor in the catalytic mechanism. The active site involves Glu114.

This sequence belongs to the GCKR-like family. MurNAc-6-P etherase subfamily. In terms of assembly, homodimer.

The enzyme catalyses N-acetyl-D-muramate 6-phosphate + H2O = N-acetyl-D-glucosamine 6-phosphate + (R)-lactate. It functions in the pathway amino-sugar metabolism; N-acetylmuramate degradation. In terms of biological role, specifically catalyzes the cleavage of the D-lactyl ether substituent of MurNAc 6-phosphate, producing GlcNAc 6-phosphate and D-lactate. The chain is N-acetylmuramic acid 6-phosphate etherase 2 from Lactiplantibacillus plantarum (strain ATCC BAA-793 / NCIMB 8826 / WCFS1) (Lactobacillus plantarum).